Here is a 591-residue protein sequence, read N- to C-terminus: V-type ATP synthase alpha chain (591 aa).

ATP is bound at residue 233 to 240 (GPFGAGKT).

The protein belongs to the ATPase alpha/beta chains family.

It carries out the reaction ATP + H2O + 4 H(+)(in) = ADP + phosphate + 5 H(+)(out). Functionally, produces ATP from ADP in the presence of a proton gradient across the membrane. The V-type alpha chain is a catalytic subunit. The protein is V-type ATP synthase alpha chain of Streptococcus pneumoniae (strain ATCC 700669 / Spain 23F-1).